Reading from the N-terminus, the 465-residue chain is Cysteine--tRNA ligase (465 aa).

Residue Cys27 participates in Zn(2+) binding. A 'HIGH' region motif is present at residues 29 to 39; that stretch reads PTVYNFFHIGN. Residues Cys207, His232, and Glu236 each contribute to the Zn(2+) site. The 'KMSKS' region signature appears at 264–268; that stretch reads KMSKS. Residue Lys267 coordinates ATP.

It belongs to the class-I aminoacyl-tRNA synthetase family. Monomer. Zn(2+) is required as a cofactor.

The protein resides in the cytoplasm. The catalysed reaction is tRNA(Cys) + L-cysteine + ATP = L-cysteinyl-tRNA(Cys) + AMP + diphosphate. In Clostridium botulinum (strain 657 / Type Ba4), this protein is Cysteine--tRNA ligase.